Consider the following 595-residue polypeptide: Isoprene synthase, chloroplastic (595 aa).

A chloroplast-targeting transit peptide spans 1–37 (MATELLCLHRPISLTHKLFRNPLPKVIQATPLTLKLR). Aspartate 345 contacts dimethylallyl diphosphate. Aspartate 345 and aspartate 349 together coordinate Mg(2+). Positions 345-349 (DDIYD) match the DDXXD motif motif. Residues glutamate 423, arginine 486, and asparagine 489 each contribute to the dimethylallyl diphosphate site. Mg(2+) is bound by residues asparagine 489, serine 493, and glutamate 497.

The protein belongs to the terpene synthase family. Tpsb subfamily. Homodimer. Mg(2+) is required as a cofactor. It depends on Mn(2+) as a cofactor.

It localises to the plastid. Its subcellular location is the chloroplast. The catalysed reaction is dimethylallyl diphosphate = isoprene + diphosphate. The protein operates within secondary metabolite biosynthesis; terpenoid biosynthesis. Competitive inhibition is mediated by geranyl diphosphate (GPP). Its function is as follows. Lyase that catalyzes the formation of isoprene from dimethylallyl diphosphate via a syn-periplanar elimination mechanism in which the diphosphate-leaving group serves as a general base. In Populus canescens (Grey poplar), this protein is Isoprene synthase, chloroplastic.